We begin with the raw amino-acid sequence, 148 residues long: Large ribosomal subunit protein bL9 (148 aa).

The protein belongs to the bacterial ribosomal protein bL9 family.

Functionally, binds to the 23S rRNA. The chain is Large ribosomal subunit protein bL9 from Dechloromonas aromatica (strain RCB).